A 492-amino-acid chain; its full sequence is Probable malate:quinone oxidoreductase 1 (492 aa).

It belongs to the MQO family. It depends on FAD as a cofactor.

The enzyme catalyses (S)-malate + a quinone = a quinol + oxaloacetate. It participates in carbohydrate metabolism; tricarboxylic acid cycle; oxaloacetate from (S)-malate (quinone route): step 1/1. The polypeptide is Probable malate:quinone oxidoreductase 1 (Staphylococcus epidermidis (strain ATCC 35984 / DSM 28319 / BCRC 17069 / CCUG 31568 / BM 3577 / RP62A)).